The primary structure comprises 30 residues: MELILNKEYRLVIIVLISVYYRYRFFLLLF.

A helical transmembrane segment spans residues 9–26; it reads YRLVIIVLISVYYRYRFF.

The protein localises to the plastid. It is found in the chloroplast membrane. This is an uncharacterized protein from Marchantia polymorpha (Common liverwort).